The chain runs to 411 residues: Translation initiation factor 2 subunit gamma (411 aa).

Residues Q9–K203 form the tr-type G domain. A G1 region spans residues G18 to T25. The Mg(2+) site is built by D21, T25, G46, and T48. D21–T26 contributes to the GTP binding site. A G2 region spans residues G46–K50. Zn(2+) is bound by residues C61, C64, C73, and C76. The interval D90–G93 is G3. Residues N146–E149 and S181–L183 contribute to the GTP site. Residues N146 to E149 form a G4 region. The G5 stretch occupies residues S181–L183.

It belongs to the TRAFAC class translation factor GTPase superfamily. Classic translation factor GTPase family. EIF2G subfamily. As to quaternary structure, heterotrimer composed of an alpha, a beta and a gamma chain. Mg(2+) is required as a cofactor.

The enzyme catalyses GTP + H2O = GDP + phosphate + H(+). EIF-2 functions in the early steps of protein synthesis by forming a ternary complex with GTP and initiator tRNA. This Pyrococcus abyssi (strain GE5 / Orsay) protein is Translation initiation factor 2 subunit gamma.